We begin with the raw amino-acid sequence, 548 residues long: Natural resistance-associated macrophage protein 1 (548 aa).

A compositionally biased stretch (polar residues) spans Met1–Gly11. Residues Met1–Glu38 form a disordered region. Over Met1 to Leu55 the chain is Cytoplasmic. A helical membrane pass occupies residues Trp56 to Gly73. Topologically, residues Asn74–Gly82 are extracellular. A helical transmembrane segment spans residues Ala83–Leu102. Over Cys103–Glu139 the chain is Cytoplasmic. The chain crosses the membrane as a helical span at residues Leu140–Leu160. Topologically, residues Ser161–Arg164 are extracellular. A helical transmembrane segment spans residues Ile165–Leu184. At Asp185–Glu193 the chain is on the cytoplasmic side. Residues Ala194–Ala214 traverse the membrane as a helical segment. Residues Gln215 to Glu237 lie on the Extracellular side of the membrane. The helical transmembrane segment at Leu238 to Leu256 threads the bilayer. At His257–Glu284 the chain is on the cytoplasmic side. Residues Ala285–Gly304 traverse the membrane as a helical segment. Over Gln305–Gly346 the chain is Extracellular. Asn335 is a glycosylation site (N-linked (GlcNAc...) asparagine). A helical membrane pass occupies residues Val347 to Leu366. Topologically, residues Ala367–Arg397 are cytoplasmic. A helical transmembrane segment spans residues Val398–Phe415. Residues Arg416–Asp426 are Extracellular-facing. Residues Leu427 to Thr447 traverse the membrane as a helical segment. At Ser448–Lys463 the chain is on the cytoplasmic side. The chain crosses the membrane as a helical span at residues Val464–Val485. At Pro486–Tyr493 the chain is on the extracellular side. Residues Phe494–Trp513 form a helical membrane-spanning segment. Over Thr514 to Gly548 the chain is Cytoplasmic.

This sequence belongs to the NRAMP family.

It is found in the late endosome membrane. The protein resides in the lysosome membrane. It catalyses the reaction Zn(2+)(in) + H(+)(out) = Zn(2+)(out) + H(+)(in). It carries out the reaction Fe(2+)(in) + H(+)(out) = Fe(2+)(out) + H(+)(in). The enzyme catalyses Mn(2+)(in) + H(+)(out) = Mn(2+)(out) + H(+)(in). In terms of biological role, macrophage-specific antiporter that fluxes metal ions in either direction against a proton gradient. Localized to late endosomal lysosomal membranes, delivers bivalent cations from the cytosol into these acidic compartments where they may directly affect antimicrobial activity. Involved in iron metabolism and host natural resistance to infection with intracellular parasites. Pathogen resistance involves sequestration of Fe(2+) and Mn(2+), cofactors of both prokaryotic and eukaryotic catalases and superoxide dismutases, not only to protect the macrophage against its own generation of reactive oxygen species, but to deny the cations to the pathogen for synthesis of its protective enzymes. This Bubalus bubalis (Domestic water buffalo) protein is Natural resistance-associated macrophage protein 1 (SLC11A1).